The sequence spans 410 residues: Transcription factor PHYTOCHROME INTERACTING FACTOR-LIKE 13 (410 aa).

The span at 82-92 shows a compositional bias: low complexity; the sequence is AAAAAGPSSHH. Disordered stretches follow at residues 82-110 and 137-225; these read AAAA…MRSG and CRDA…AEVH. Pro residues predominate over residues 93-104; sequence APPPDLPPPAAR. Basic and acidic residues predominate over residues 187-197; the sequence is GREDSDSRSED. Over residues 209–219 the composition is skewed to basic residues; the sequence is SSRRYGSKRRT. A basic motif region spans residues 220–233; the sequence is RAAEVHNLSERRRR. In terms of domain architecture, bHLH spans 220-269; it reads RAAEVHNLSERRRRDRINEKMRALQELIPHCNKTDKASILDEAIEYLKSL. The helix-loop-helix motif stretch occupies residues 234 to 269; the sequence is DRINEKMRALQELIPHCNKTDKASILDEAIEYLKSL. Residues 357 to 410 form a disordered region; it reads PFLHPDGWQTVPPQVSGPYASGPQVAQQNQIPKASASTVLPNSGAEQPPTSDGI. Residues 380 to 410 are compositionally biased toward polar residues; sequence QVAQQNQIPKASASTVLPNSGAEQPPTSDGI.

This sequence belongs to the bHLH protein family. As to quaternary structure, interacts with PRR1. Interacts with LF. In terms of tissue distribution, highly expressed in the node portions of the stem. Expressed in the leaves and the basal part of shoots.

The protein resides in the nucleus. In terms of biological role, transcription factor that may act as negative regulator of phyB-dependent light signal transduction. Transcription activator that acts as a positive regulator of internode elongation. May function via regulation of cell wall-related genes. May play a role in a drought-associated growth-restriction mechanism in response to drought stress. The protein is Transcription factor PHYTOCHROME INTERACTING FACTOR-LIKE 13 of Oryza sativa subsp. japonica (Rice).